The primary structure comprises 345 residues: Dimethyladenosine transferase 1, mitochondrial (345 aa).

The N-terminal 27 residues, 1 to 27 (MAAPGKLSTCRLPPLPTIREIIKLFRL), are a transit peptide targeting the mitochondrion. Residues leucine 38, glycine 63, glutamate 85, lysine 86, aspartate 111, valine 112, and asparagine 141 each contribute to the S-adenosyl-L-methionine site.

This sequence belongs to the class I-like SAM-binding methyltransferase superfamily. rRNA adenine N(6)-methyltransferase family. KsgA subfamily. In terms of assembly, interacts with mitochondrial RNA polymerase POLRMT. Interacts with TFAM. Bound to the maturing mtSSU until the late stages of assembly.

Its subcellular location is the mitochondrion. It carries out the reaction adenosine(N)/adenosine(N+1) in rRNA + 4 S-adenosyl-L-methionine = N(6)-dimethyladenosine(N)/N(6)-dimethyladenosine(N+1) in rRNA + 4 S-adenosyl-L-homocysteine + 4 H(+). In terms of biological role, mitochondrial methyltransferase which uses S-adenosyl methionine to dimethylate two highly conserved adjacent adenosine residues (A1583 and A1584) within the loop of helix 45 at the 3-prime end of 12S rRNA, thereby regulating the assembly or stability of the small subunit of the mitochondrial ribosome. Also required for basal transcription of mitochondrial DNA, probably via its interaction with POLRMT and TFAM. Stimulates transcription independently of the methyltransferase activity. The chain is Dimethyladenosine transferase 1, mitochondrial (TFB1M) from Macaca fascicularis (Crab-eating macaque).